The following is a 164-amino-acid chain: Endoribonuclease YbeY (164 aa).

Positions 130, 134, and 140 each coordinate Zn(2+).

This sequence belongs to the endoribonuclease YbeY family. Zn(2+) serves as cofactor.

The protein localises to the cytoplasm. Functionally, single strand-specific metallo-endoribonuclease involved in late-stage 70S ribosome quality control and in maturation of the 3' terminus of the 16S rRNA. The polypeptide is Endoribonuclease YbeY (Streptococcus mutans serotype c (strain ATCC 700610 / UA159)).